Here is a 254-residue protein sequence, read N- to C-terminus: Protein orai-2 (254 aa).

4 helical membrane-spanning segments follow: residues 66-83, 94-114, 148-168, and 196-216; these read TSALLSGFAMVAMVEVQL, LIAFSACTTVLVAVHLFALLI, LAWGFSTVLGILLFLAEVVLL, and AALVSTIIMVPVGLIFVVFTI.

Belongs to the Orai family. Oligomerizes in homomeric and heteromeric ORAI complexes. Native CRAC channels most likely consist of hexameric ORAI heteromers, implying that diverse ORAI1, ORAI2 and ORAI3 subunit combinations with distinct biophysical properties can operate in a cell-type specific way. Interacts with STIM1; this regulates channel activity. Interacts with CRACR2A/EFCAB4B.

It localises to the cell membrane. It carries out the reaction Ca(2+)(in) = Ca(2+)(out). CRAC channels are regulated by fast Ca(2+)-dependent inactivation (FCDI), a mechanism that limits Ca(2+) influx and cell toxicity. ORAI2 channels display prominent FCDI. Inhibited by lanthanides such as Gd(3+) ions. In terms of biological role, pore-forming subunit of inward rectifying Ca(2+) release-activated Ca(2+) (CRAC) channels. Assembles with ORAI1 and ORAI3 to form hexameric CRAC channels that mediate Ca(2+) influx upon depletion of endoplasmic reticulum Ca(2+) store and channel activation by Ca(2+) sensor STIM1, a process known as store-operated Ca(2+) entry (SOCE). Various pore subunit combinations may account for distinct CRAC channel spatiotemporal and cell-type specific dynamics. ORAI1 mainly contributes to the generation of Ca(2+) plateaus involved in sustained Ca(2+) entry and is dispensable for cytosolic Ca(2+) oscillations, whereas ORAI2 and ORAI3 generate oscillatory patterns. CRAC channels assemble in Ca(2+) signaling microdomains where Ca(2+) influx is coupled to calmodulin and calcineurin signaling and activation of NFAT transcription factors recruited to ORAI1 via AKAP5. CRAC channels are the main pathway for Ca(2+) influx in T cells and promote the immune response to pathogens by activating NFAT-dependent cytokine and chemokine transcription. The protein is Protein orai-2 (ORAI2) of Homo sapiens (Human).